The following is a 788-amino-acid chain: Protein translocase subunit SecA 2 (788 aa).

Residues glutamine 86, 104–108 (GEGKT), and aspartate 493 contribute to the ATP site.

Belongs to the SecA family. Monomer and homodimer. Part of the essential Sec protein translocation apparatus which comprises SecA, SecYEG and auxiliary proteins SecDF. Other proteins may also be involved.

Its subcellular location is the cell membrane. It localises to the cytoplasm. It carries out the reaction ATP + H2O + cellular proteinSide 1 = ADP + phosphate + cellular proteinSide 2.. Functionally, part of the Sec protein translocase complex. Interacts with the SecYEG preprotein conducting channel. Has a central role in coupling the hydrolysis of ATP to the transfer of proteins into and across the cell membrane, serving as an ATP-driven molecular motor driving the stepwise translocation of polypeptide chains across the membrane. The chain is Protein translocase subunit SecA 2 from Geobacillus thermodenitrificans (strain NG80-2).